The following is a 90-amino-acid chain: Small ribosomal subunit protein uS19 (90 aa).

The protein belongs to the universal ribosomal protein uS19 family.

In terms of biological role, protein S19 forms a complex with S13 that binds strongly to the 16S ribosomal RNA. The sequence is that of Small ribosomal subunit protein uS19 from Thioalkalivibrio sulfidiphilus (strain HL-EbGR7).